Consider the following 80-residue polypeptide: Exodeoxyribonuclease 7 small subunit (80 aa).

It belongs to the XseB family. Heterooligomer composed of large and small subunits.

The protein localises to the cytoplasm. The enzyme catalyses Exonucleolytic cleavage in either 5'- to 3'- or 3'- to 5'-direction to yield nucleoside 5'-phosphates.. In terms of biological role, bidirectionally degrades single-stranded DNA into large acid-insoluble oligonucleotides, which are then degraded further into small acid-soluble oligonucleotides. This Rickettsia massiliae (strain Mtu5) protein is Exodeoxyribonuclease 7 small subunit.